The primary structure comprises 240 residues: Ribosome maturation protein SDO1 homolog (240 aa).

The protein belongs to the SDO1/SBDS family.

The sequence is that of Ribosome maturation protein SDO1 homolog from Methanocaldococcus jannaschii (strain ATCC 43067 / DSM 2661 / JAL-1 / JCM 10045 / NBRC 100440) (Methanococcus jannaschii).